The chain runs to 164 residues: MRKLSWQHIVLIVLAIILILWIISLLLCRKPVRPTYQVPIIQPMQVIQPHQNDIDPAWQTTYSPNNTDNQNQQYVLYYFNNPSCPHCKNFSSTWDMLKNNFRSINNLSLKEISTDKQENEHLVFYYNIRRVPTIILVTPDKNLEYSGNKSLEDLTQFIRSNMNQ.

The helical transmembrane segment at 8–28 (HIVLIVLAIILILWIISLLLC) threads the bilayer. The 128-residue stretch at 36-163 (YQVPIIQPMQ…LTQFIRSNMN (128 aa)) folds into the Thioredoxin domain. C84 and C87 are oxidised to a cystine.

It belongs to the thioredoxin family.

It is found in the host membrane. It localises to the virion. The chain is Thioredoxin domain-containing protein R443 from Acanthamoeba polyphaga mimivirus (APMV).